Here is a 156-residue protein sequence, read N- to C-terminus: Cyanate hydratase (156 aa).

Residues arginine 96, glutamate 99, and serine 122 contribute to the active site.

This sequence belongs to the cyanase family.

The catalysed reaction is cyanate + hydrogencarbonate + 3 H(+) = NH4(+) + 2 CO2. Functionally, catalyzes the reaction of cyanate with bicarbonate to produce ammonia and carbon dioxide. In Escherichia coli (strain ATCC 8739 / DSM 1576 / NBRC 3972 / NCIMB 8545 / WDCM 00012 / Crooks), this protein is Cyanate hydratase.